A 601-amino-acid chain; its full sequence is Ribosomal oxygenase 1 (601 aa).

Residues methionine 1 to arginine 11 are compositionally biased toward basic and acidic residues. The interval methionine 1–leucine 149 is disordered. Low complexity predominate over residues glutamate 61–alanine 70. Residues aspartate 73 to aspartate 87 are compositionally biased toward basic and acidic residues. In terms of domain architecture, JmjC spans cysteine 254–alanine 399. Histidine 300, aspartate 302, and histidine 365 together coordinate Fe cation.

Belongs to the ROX family. NO66 subfamily. Requires Fe(2+) as cofactor.

Its subcellular location is the nucleus. It is found in the nucleolus. The protein localises to the nucleoplasm. The enzyme catalyses N(6),N(6)-dimethyl-L-lysyl(36)-[histone H3] + 2 2-oxoglutarate + 2 O2 = L-lysyl(36)-[histone H3] + 2 formaldehyde + 2 succinate + 2 CO2. It catalyses the reaction N(6)-methyl-L-lysyl-[protein] + 2-oxoglutarate + O2 = L-lysyl-[protein] + formaldehyde + succinate + CO2. It carries out the reaction L-histidyl-[protein] + 2-oxoglutarate + O2 = (3S)-3-hydroxy-L-histidyl-[protein] + succinate + CO2. Oxygenase that can act as both a histone lysine demethylase and a ribosomal histidine hydroxylase. Specifically demethylates 'Lys-4' (H3K4me) and 'Lys-36' (H3K36me) of histone H3, thereby playing a central role in histone code. Preferentially demethylates trimethylated H3 'Lys-4' (H3K4me3) and monomethylated H3 'Lys-4' (H3K4me1) residues, while it has weaker activity for dimethylated H3 'Lys-36' (H3K36me2). Also catalyzes demethylation of non-histone proteins. Also catalyzes the hydroxylation of 60S ribosomal protein L8 on 'His-216', thereby playing a role in ribosome biogenesis. The polypeptide is Ribosomal oxygenase 1 (RIOX1) (Gallus gallus (Chicken)).